Here is a 351-residue protein sequence, read N- to C-terminus: Protein FAM118B (351 aa).

The residue at position 2 (Ala2) is an N-acetylalanine. Ser9 carries the phosphoserine modification.

It belongs to the FAM118 family.

It localises to the nucleus. The protein resides in the cajal body. Functionally, may play a role in Cajal bodies formation. In Bos taurus (Bovine), this protein is Protein FAM118B (FAM118B).